The primary structure comprises 125 residues: UPF0231 protein APL_0968 (125 aa).

This sequence belongs to the UPF0231 family.

This Actinobacillus pleuropneumoniae serotype 5b (strain L20) protein is UPF0231 protein APL_0968.